The chain runs to 298 residues: GTP cyclohydrolase FolE2 (298 aa).

Belongs to the GTP cyclohydrolase IV family.

The enzyme catalyses GTP + H2O = 7,8-dihydroneopterin 3'-triphosphate + formate + H(+). Its pathway is cofactor biosynthesis; 7,8-dihydroneopterin triphosphate biosynthesis; 7,8-dihydroneopterin triphosphate from GTP: step 1/1. In terms of biological role, converts GTP to 7,8-dihydroneopterin triphosphate. The chain is GTP cyclohydrolase FolE2 from Xylella fastidiosa (strain M23).